Consider the following 348-residue polypeptide: Dihydroorotase (348 aa).

Residues histidine 17 and histidine 19 each contribute to the Zn(2+) site. Residues 19-21 (HLR) and asparagine 45 each bind substrate. Zn(2+)-binding residues include lysine 103, histidine 140, and histidine 178. Lysine 103 bears the N6-carboxylysine mark. Histidine 140 contacts substrate. Residue leucine 223 coordinates substrate. Aspartate 251 contributes to the Zn(2+) binding site. The active site involves aspartate 251. 2 residues coordinate substrate: histidine 255 and alanine 267.

The protein belongs to the metallo-dependent hydrolases superfamily. DHOase family. Class II DHOase subfamily. As to quaternary structure, homodimer. Requires Zn(2+) as cofactor.

The enzyme catalyses (S)-dihydroorotate + H2O = N-carbamoyl-L-aspartate + H(+). The protein operates within pyrimidine metabolism; UMP biosynthesis via de novo pathway; (S)-dihydroorotate from bicarbonate: step 3/3. Functionally, catalyzes the reversible cyclization of carbamoyl aspartate to dihydroorotate. This is Dihydroorotase from Salmonella dublin (strain CT_02021853).